We begin with the raw amino-acid sequence, 141 residues long: Lutropin subunit beta (141 aa).

Positions 1 to 20 (MEMLQGLLLLMLLSMGGTWA) are cleaved as a signal peptide. Disulfide bonds link cysteine 29–cysteine 77, cysteine 43–cysteine 92, cysteine 46–cysteine 130, cysteine 54–cysteine 108, cysteine 58–cysteine 110, and cysteine 113–cysteine 120. Residues asparagine 33 and asparagine 50 are each glycosylated (N-linked (GlcNAc...) asparagine).

Belongs to the glycoprotein hormones subunit beta family. Heterodimer of a common alpha chain and a unique beta chain which confers biological specificity to thyrotropin, lutropin, follitropin and gonadotropin.

It localises to the secreted. Promotes spermatogenesis and ovulation by stimulating the testes and ovaries to synthesize steroids. The chain is Lutropin subunit beta (LHB) from Pongo pygmaeus (Bornean orangutan).